We begin with the raw amino-acid sequence, 204 residues long: dITP/XTP pyrophosphatase (204 aa).

8–13 (SNNAHK) contacts substrate. The Mg(2+) site is built by glutamate 41 and aspartate 76. Aspartate 76 serves as the catalytic Proton acceptor. Residues serine 77, 159 to 162 (FGYD), lysine 182, and 187 to 188 (HR) each bind substrate.

This sequence belongs to the HAM1 NTPase family. In terms of assembly, homodimer. Mg(2+) is required as a cofactor.

It catalyses the reaction XTP + H2O = XMP + diphosphate + H(+). The catalysed reaction is dITP + H2O = dIMP + diphosphate + H(+). The enzyme catalyses ITP + H2O = IMP + diphosphate + H(+). In terms of biological role, pyrophosphatase that catalyzes the hydrolysis of nucleoside triphosphates to their monophosphate derivatives, with a high preference for the non-canonical purine nucleotides XTP (xanthosine triphosphate), dITP (deoxyinosine triphosphate) and ITP. Seems to function as a house-cleaning enzyme that removes non-canonical purine nucleotides from the nucleotide pool, thus preventing their incorporation into DNA/RNA and avoiding chromosomal lesions. In Clostridium perfringens (strain 13 / Type A), this protein is dITP/XTP pyrophosphatase.